Here is a 98-residue protein sequence, read N- to C-terminus: HssA/B-like protein 33 (98 aa).

Disordered regions lie at residues 1-29 (MTLF…SGTS) and 60-98 (AKSS…SCSC). A compositionally biased stretch (gly residues) spans 60 to 72 (AKSSGGSCGGKGG). A compositionally biased stretch (basic residues) spans 73–88 (PHNHGHGNGHGPHGHG). Residues 89–98 (GKGSGGSCSC) show a composition bias toward gly residues.

This sequence belongs to the hssA/B family.

In Dictyostelium discoideum (Social amoeba), this protein is HssA/B-like protein 33 (hssl33).